Consider the following 695-residue polypeptide: Glycine--tRNA ligase beta subunit (695 aa).

It belongs to the class-II aminoacyl-tRNA synthetase family. In terms of assembly, tetramer of two alpha and two beta subunits.

The protein localises to the cytoplasm. It catalyses the reaction tRNA(Gly) + glycine + ATP = glycyl-tRNA(Gly) + AMP + diphosphate. The protein is Glycine--tRNA ligase beta subunit of Lawsonia intracellularis (strain PHE/MN1-00).